A 433-amino-acid chain; its full sequence is Beta-agarase AgaA (433 aa).

Positions 1–20 (MRKITSILLTCVMGCTATYA) are cleaved as a signal peptide. The region spanning 21–295 (ADWDGVPVPA…WVRFYKPVPI (275 aa)) is the GH16 domain. Glu147 functions as the Nucleophile in the catalytic mechanism. Glu152 acts as the Proton donor in catalysis. In terms of domain architecture, CBM6 spans 300 to 431 (TTVELGNFHN…QWNGDEIRFV (132 aa)).

The protein belongs to the glycosyl hydrolase 16 family. In terms of assembly, monomer.

It is found in the periplasm. The enzyme catalyses Hydrolysis of (1-&gt;4)-beta-D-galactosidic linkages in agarose, giving the tetramer as the predominant product.. With respect to regulation, activity is abolished by Hg(2+), Cu(2+), Pb(2+) and Zn(2+) ions, but is not affected by NaCl up to at least 1.0 M, Mg(2+), K(+) and Ca(2+). Not affected by iodoacetamide, p-chloromercuribenzoate, dithiothreitol, 2-mercaptoethanol, EDTA and sodium dodecyl sulfate. Inhibited by N-bromosuccinimide. Its function is as follows. Endo-type beta-agarase, which produces neoagarotetraose (NA4) as the main final product, with a small amount of neoagarohexaose (NA6) and neoagarobiose (NA2). In Microbulbifer thermotolerans, this protein is Beta-agarase AgaA.